A 191-amino-acid chain; its full sequence is MYQDLIRNELTEAADVLNKFLSDDHNIAQIEAAAKMIAESFKQDGKVLSCGNGGSHCDAMHFAEELTGRYRENRPGYAGIAISDPSHLSCVSNDFGYDYVFSRYVEAVGRKGDVLFGLSTSGNSGNILKAIEAAKAKGMKTIALTGKDGGKMAGLADVEIRVPHFGYADRIQEVHIKIIHIIIQLIEKEME.

The region spanning 37–191 (IAESFKQDGK…IIQLIEKEME (155 aa)) is the SIS domain. 52-54 (NGG) serves as a coordination point for substrate. Zn(2+) is bound by residues His61 and Glu65. Residues Glu65, 93 to 94 (ND), 119 to 121 (STS), Ser124, and Gln172 each bind substrate. Zn(2+)-binding residues include Gln172 and His180.

The protein belongs to the SIS family. GmhA subfamily. As to quaternary structure, homotetramer. Requires Zn(2+) as cofactor.

It localises to the cytoplasm. It carries out the reaction 2 D-sedoheptulose 7-phosphate = D-glycero-alpha-D-manno-heptose 7-phosphate + D-glycero-beta-D-manno-heptose 7-phosphate. The protein operates within carbohydrate biosynthesis; D-glycero-D-manno-heptose 7-phosphate biosynthesis; D-glycero-alpha-D-manno-heptose 7-phosphate and D-glycero-beta-D-manno-heptose 7-phosphate from sedoheptulose 7-phosphate: step 1/1. It participates in bacterial outer membrane biogenesis; LPS core biosynthesis. In terms of biological role, catalyzes the isomerization of sedoheptulose 7-phosphate in D-glycero-D-manno-heptose 7-phosphate. This is Phosphoheptose isomerase from Vibrio vulnificus (strain CMCP6).